The following is a 356-amino-acid chain: Vacuolar protein sorting-associated protein 26 (356 aa).

Residues 301-356 form a disordered region; sequence MRRPGTEDDEEEKQTTSIPGTQKFTAPAPVEHPKPESPRSDPKSGSTSPDDNSDSS. The segment covering 315 to 324 has biased composition (polar residues); sequence TTSIPGTQKF. The segment covering 331–342 has biased composition (basic and acidic residues); the sequence is EHPKPESPRSDP.

This sequence belongs to the VPS26 family.

May play a role in vesicular protein sorting, similar to the yeast retromer proteins. This is Vacuolar protein sorting-associated protein 26 (vps-26) from Caenorhabditis elegans.